The sequence spans 157 residues: NADPH-dependent 7-cyano-7-deazaguanine reductase (157 aa).

The active-site Thioimide intermediate is Cys55. Asp62 functions as the Proton donor in the catalytic mechanism. Substrate-binding positions include 77 to 79 and 96 to 97; these read VES and HE.

Belongs to the GTP cyclohydrolase I family. QueF type 1 subfamily.

The protein resides in the cytoplasm. The enzyme catalyses 7-aminomethyl-7-carbaguanine + 2 NADP(+) = 7-cyano-7-deazaguanine + 2 NADPH + 3 H(+). It participates in tRNA modification; tRNA-queuosine biosynthesis. Catalyzes the NADPH-dependent reduction of 7-cyano-7-deazaguanine (preQ0) to 7-aminomethyl-7-deazaguanine (preQ1). This Neisseria meningitidis serogroup B (strain ATCC BAA-335 / MC58) protein is NADPH-dependent 7-cyano-7-deazaguanine reductase.